The sequence spans 486 residues: UDP-N-acetylmuramate--L-alanine ligase (486 aa).

126–132 (GTHGKTS) is an ATP binding site.

Belongs to the MurCDEF family.

It is found in the cytoplasm. The enzyme catalyses UDP-N-acetyl-alpha-D-muramate + L-alanine + ATP = UDP-N-acetyl-alpha-D-muramoyl-L-alanine + ADP + phosphate + H(+). It participates in cell wall biogenesis; peptidoglycan biosynthesis. Its function is as follows. Cell wall formation. In Corynebacterium glutamicum (strain R), this protein is UDP-N-acetylmuramate--L-alanine ligase.